A 439-amino-acid chain; its full sequence is MKIYDFVSKTDKEVSLDKKNIKMYVCGPTVYNHVHIGNLRPIITFDVLNRLFLELGYNVTFIHNITDIDDKIVNKAKEENIGELELSSYYETQYFDILKTINIHTSNMKFPRVSDHIKDIENYIQKIVNNKFAYLVDGDVYFDTTKSNQYGKISNKKLDELLVGDKSEDNLKKNNPQDFALWKQTTIGLNWDLKFSTGRPGWHTECSCLINKYLGDQIDIHGGGIDLKFPHHENENIQNIAVNNKDLARIWMHVGHLNINNQKMSKSLSNFILAKDLLSEYNTNTVRWFFYQTSYSNPLNFTTENLINSKNQLENIIYNLNIFKSHLIIEQKYNEKNLEFDKSNLIELTNNFNLPNIVSFIEEKIKYSSILLRNKNFEELNKLHFNLSYLLTKILGIIHVNLFDDEAIELLNKWNKLKQEKNFSESDKYRKLLMEKKLL.

Cys26 contributes to the Zn(2+) binding site. The 'HIGH' region motif lies at 28–38 (PTVYNHVHIGN). The Zn(2+) site is built by Cys206, His231, and Glu235. A 'KMSKS' region motif is present at residues 263–267 (KMSKS). Residue Lys266 coordinates ATP.

This sequence belongs to the class-I aminoacyl-tRNA synthetase family. Monomer. Zn(2+) serves as cofactor.

It localises to the cytoplasm. The catalysed reaction is tRNA(Cys) + L-cysteine + ATP = L-cysteinyl-tRNA(Cys) + AMP + diphosphate. This is Cysteine--tRNA ligase from Malacoplasma penetrans (strain HF-2) (Mycoplasma penetrans).